Consider the following 961-residue polypeptide: Glycine dehydrogenase (decarboxylating) (961 aa).

K709 bears the N6-(pyridoxal phosphate)lysine mark.

This sequence belongs to the GcvP family. In terms of assembly, the glycine cleavage system is composed of four proteins: P, T, L and H. Pyridoxal 5'-phosphate serves as cofactor.

The enzyme catalyses N(6)-[(R)-lipoyl]-L-lysyl-[glycine-cleavage complex H protein] + glycine + H(+) = N(6)-[(R)-S(8)-aminomethyldihydrolipoyl]-L-lysyl-[glycine-cleavage complex H protein] + CO2. Functionally, the glycine cleavage system catalyzes the degradation of glycine. The P protein binds the alpha-amino group of glycine through its pyridoxal phosphate cofactor; CO(2) is released and the remaining methylamine moiety is then transferred to the lipoamide cofactor of the H protein. This chain is Glycine dehydrogenase (decarboxylating), found in Teredinibacter turnerae (strain ATCC 39867 / T7901).